The following is a 131-amino-acid chain: Hypocretin neuropeptide precursor (131 aa).

Q34 carries the post-translational modification Pyrrolidone carboxylic acid. 2 disulfides stabilise this stretch: C39/C45 and C40/C47. Leucine amide is present on L66. The disordered stretch occupies residues 104 to 131; sequence EPALRPCSGRRCPSEAASSVAPGGRSGV.

It belongs to the orexin family.

The protein localises to the rough endoplasmic reticulum. It is found in the cytoplasmic vesicle. It localises to the synapse. In terms of biological role, neuropeptides that play a significant role in the regulation of food intake and sleep-wakefulness, possibly by coordinating the complex behavioral and physiologic responses of these complementary homeostatic functions. A broader role in the homeostatic regulation of energy metabolism, autonomic function, hormonal balance and the regulation of body fluids, is also suggested. Its function is as follows. Binds to orexin receptors HCRTR1/OX1R and HCRTR2/OX2R with a high affinity. Stimulates food intake. Modulates pituitary luteinizing hormone secretion in an ovarian steroid-dependent manner. Functionally, binds to orexin receptor HCRTR2/OX2R only. Stimulates food intake. Modulates pituitary luteinizing hormone secretion in an ovarian steroid-dependent manner. The sequence is that of Hypocretin neuropeptide precursor (HCRT) from Bos taurus (Bovine).